We begin with the raw amino-acid sequence, 491 residues long: Cytosolic Fe-S cluster assembly factor NAR1 (491 aa).

8 residues coordinate [4Fe-4S] cluster: C20, C59, C62, C65, C177, C231, C412, and C416.

This sequence belongs to the NARF family. Interacts with CIA1.

In terms of biological role, component of the cytosolic Fe/S protein assembly machinery. Required for maturation of extramitochondrial Fe/S proteins. May play a role in the transfer of pre-assembled Fe/S clusters to target apoproteins. The polypeptide is Cytosolic Fe-S cluster assembly factor NAR1 (NAR1) (Saccharomyces cerevisiae (strain YJM789) (Baker's yeast)).